The following is a 264-amino-acid chain: MERVRGACQSPILILLAIVLPFPSTSGPAIHPLIESLAARIRQRRAQLPELSPFALDSVMESISGQLDGEELLISNELHRCRGLRKLHLEIARLGGGLQVLHCVFFPDPRFDLPIFGADIVASPAGISAAIVDLSPVGLTMPVALLHGLESLPIPAFQQVRELPAWGSIFSPFVQFIRPASSEEESWFVDLADGYLKALISSVIDATPDASDAASTIQRHKSQLSYCIQQKRNDKTRGVLEKAFNPQWADRYIEEILFEDPPPL.

This sequence belongs to the HY2 family.

It carries out the reaction (2R,3Z)-phycocyanobilin + 4 oxidized [2Fe-2S]-[ferredoxin] = biliverdin IXalpha + 4 reduced [2Fe-2S]-[ferredoxin] + 4 H(+). In terms of biological role, catalyzes the four-electron reduction of biliverdin IX-alpha (2-electron reduction at both the A and D rings); the reaction proceeds via an isolatable 2-electron intermediate, 181,182-dihydrobiliverdin. The chain is Phycocyanobilin:ferredoxin oxidoreductase from Prochlorococcus marinus (strain MIT 9303).